Here is a 222-residue protein sequence, read N- to C-terminus: MYAVFGLTRSEVTPHEAAAARYKHRGVIDRRGAAMTSRRAPDGGLNLDDFMRRQRGRHLDLPYPRGYTLFVCDVEETILTPRDVEYWKLLVVTQGQLRVIGTIGLANLFSWDRSVAGVAADGSVLCYEISRENFVVRAADSLPQLLERGLLHSYFEDVERAAQGRLRHGNRSGLRRDADGQVIRESACYVSRALLRHRVTPGKQEITDAMFEAGNVPSALLP.

Belongs to the herpesviridae US22 family. As to quaternary structure, interacts with UL25. Interacts with ISGylation machinery components ISG15, UBA7 and HERC5; these interactions inhibit global protein ISGylation. ISGylated; ISGylation regulates UL26 stability and inhibits its activities to suppress NF-kappa-B signaling.

It localises to the virion tegument. The protein localises to the host nucleus. Its function is as follows. Plays a role in the inhibition of host NF-kappa-B. This inhibition affects both the canonical and the non-canonical pathways. Blocks the induction of host IKK phosphorylation. May also influence the normal phosphorylation state of several tegument proteins including pp28 in virions. Also suppresses virus-induced ISGylation independent of its own ISGylation. This chain is Tegument protein UL26 (UL26), found in Homo sapiens (Human).